The primary structure comprises 105 residues: Small ribosomal subunit protein uS10 (105 aa).

This sequence belongs to the universal ribosomal protein uS10 family. As to quaternary structure, part of the 30S ribosomal subunit.

Its function is as follows. Involved in the binding of tRNA to the ribosomes. In Aster yellows witches'-broom phytoplasma (strain AYWB), this protein is Small ribosomal subunit protein uS10.